The primary structure comprises 401 residues: MKTLWQHCHVATMAQGVYSIIEDAAIVTSGALIEWIGPRSQLPSGEYPAVNDLQGAWVTPGLIDCHTHTVFGGNRSGEFEKRLQGVSYAEIAAAGGGIASTVRATREASEDELFASAAKRLKSLMRDGVTTVEMKSGYGLDLASERKILRVIRRLAAELPISVRSTCLAAHALPPEYQDRADDYIDHICAEMLPALAAEGLVDAVDAFCEYLAFSPEQVERVFIAAQKLGLPVKLHAEQLSSLHGSSLAARYHALSADHLEFMDEADAIAMAESDTVAVLLPGAFYFLRETRLPPMEALRKHKVKIAIASDLNPGTSPALSLRLMLNMACTCFRMTPEEALAGATIHAAQALGMAETHGSLEVGKVADFVAWQIDRPADLAYWLGGELDKRVVRHGVESSL.

Positions 66 and 68 each coordinate Fe(3+). 2 residues coordinate Zn(2+): His-66 and His-68. Positions 75, 138, and 171 each coordinate 4-imidazolone-5-propanoate. Tyr-138 provides a ligand contact to N-formimidoyl-L-glutamate. Residue His-236 coordinates Fe(3+). His-236 is a binding site for Zn(2+). 4-imidazolone-5-propanoate is bound at residue Gln-239. Asp-311 contributes to the Fe(3+) binding site. Asp-311 is a binding site for Zn(2+). Residues Asn-313 and Gly-315 each contribute to the N-formimidoyl-L-glutamate site. Thr-316 is a 4-imidazolone-5-propanoate binding site.

This sequence belongs to the metallo-dependent hydrolases superfamily. HutI family. Zn(2+) is required as a cofactor. The cofactor is Fe(3+).

The protein localises to the cytoplasm. It carries out the reaction 4-imidazolone-5-propanoate + H2O = N-formimidoyl-L-glutamate. Its pathway is amino-acid degradation; L-histidine degradation into L-glutamate; N-formimidoyl-L-glutamate from L-histidine: step 3/3. Its function is as follows. Catalyzes the hydrolytic cleavage of the carbon-nitrogen bond in imidazolone-5-propanoate to yield N-formimidoyl-L-glutamate. It is the third step in the universal histidine degradation pathway. The protein is Imidazolonepropionase of Pseudomonas fluorescens (strain Pf0-1).